The primary structure comprises 118 residues: Large ribosomal subunit protein uL18 (118 aa).

Positions 1–24 (MISKPDKNKIRQKRHRRVRGKLSG) are disordered. Positions 10–20 (IRQKRHRRVRG) are enriched in basic residues.

It belongs to the universal ribosomal protein uL18 family. In terms of assembly, part of the 50S ribosomal subunit; part of the 5S rRNA/L5/L18/L25 subcomplex. Contacts the 5S and 23S rRNAs.

Its function is as follows. This is one of the proteins that bind and probably mediate the attachment of the 5S RNA into the large ribosomal subunit, where it forms part of the central protuberance. The polypeptide is Large ribosomal subunit protein uL18 (Streptococcus agalactiae serotype III (strain NEM316)).